A 310-amino-acid polypeptide reads, in one-letter code: Porphobilinogen deaminase (310 aa).

Cys242 carries the post-translational modification S-(dipyrrolylmethanemethyl)cysteine.

This sequence belongs to the HMBS family. In terms of assembly, monomer. Dipyrromethane serves as cofactor.

It carries out the reaction 4 porphobilinogen + H2O = hydroxymethylbilane + 4 NH4(+). Its pathway is porphyrin-containing compound metabolism; protoporphyrin-IX biosynthesis; coproporphyrinogen-III from 5-aminolevulinate: step 2/4. In terms of biological role, tetrapolymerization of the monopyrrole PBG into the hydroxymethylbilane pre-uroporphyrinogen in several discrete steps. The sequence is that of Porphobilinogen deaminase from Halorhodospira halophila (strain DSM 244 / SL1) (Ectothiorhodospira halophila (strain DSM 244 / SL1)).